Consider the following 283-residue polypeptide: D-alanine aminotransferase (283 aa).

Tyr32 provides a ligand contact to substrate. Arg51 is a pyridoxal 5'-phosphate binding site. Positions 99 and 101 each coordinate substrate. Residue Lys146 is the Proton acceptor of the active site. Lys146 is modified (N6-(pyridoxal phosphate)lysine). Position 178 (Glu178) interacts with pyridoxal 5'-phosphate.

The protein belongs to the class-IV pyridoxal-phosphate-dependent aminotransferase family. As to quaternary structure, homodimer. Pyridoxal 5'-phosphate serves as cofactor.

It catalyses the reaction D-alanine + 2-oxoglutarate = D-glutamate + pyruvate. In terms of biological role, acts on the D-isomers of alanine, leucine, aspartate, glutamate, aminobutyrate, norvaline and asparagine. The enzyme transfers an amino group from a substrate D-amino acid to the pyridoxal phosphate cofactor to form pyridoxamine and an alpha-keto acid in the first half-reaction. The second-half reaction is the reverse of the first, transferring the amino group from the pyridoxamine to a second alpha-keto acid to form the product D-amino acid via a ping-pong mechanism. This is an important process in the formation of D-alanine and D-glutamate, which are essential bacterial cell wall components. The protein is D-alanine aminotransferase (dat) of Bacillus sp. (strain YM-1).